A 133-amino-acid chain; its full sequence is uncharacterized protein (133 aa).

2 helical membrane passes run 8–28 (MVLLLLLLLLLLLLLLLLLLL) and 46–66 (SFSILFLVSFSIGTFFSSIGA).

It is found in the membrane. This is an uncharacterized protein from Saccharomyces cerevisiae (strain ATCC 204508 / S288c) (Baker's yeast).